We begin with the raw amino-acid sequence, 106 residues long: Flagellar transcriptional regulator FlhD (106 aa).

This sequence belongs to the FlhD family. As to quaternary structure, homodimer; disulfide-linked. Forms a heterohexamer composed of two FlhC and four FlhD subunits. Each FlhC binds a FlhD dimer, forming a heterotrimer, and a hexamer assembles by dimerization of two heterotrimers.

It is found in the cytoplasm. Its function is as follows. Functions in complex with FlhC as a master transcriptional regulator that regulates transcription of several flagellar and non-flagellar operons by binding to their promoter region. Activates expression of class 2 flagellar genes, including fliA, which is a flagellum-specific sigma factor that turns on the class 3 genes. Also regulates genes whose products function in a variety of physiological pathways. The polypeptide is Flagellar transcriptional regulator FlhD (Burkholderia mallei (strain SAVP1)).